The sequence spans 185 residues: uncharacterized protein (185 aa).

This is an uncharacterized protein from Archaeoglobus fulgidus (strain ATCC 49558 / DSM 4304 / JCM 9628 / NBRC 100126 / VC-16).